The chain runs to 553 residues: Probable malate:quinone oxidoreductase (553 aa).

Residues 524–553 (PPPKIDLGAPSQATGNAPARPAKASADMAL) form a disordered region.

Belongs to the MQO family. FAD is required as a cofactor.

The enzyme catalyses (S)-malate + a quinone = a quinol + oxaloacetate. The protein operates within carbohydrate metabolism; tricarboxylic acid cycle; oxaloacetate from (S)-malate (quinone route): step 1/1. This chain is Probable malate:quinone oxidoreductase, found in Burkholderia cenocepacia (strain HI2424).